Consider the following 604-residue polypeptide: MYMLRPSSLLLATGLLNQGSSVLAAVISRASNQTFDYVIVGGGTAGLVLANRLTEDSSVTVAVVEAGTFPEDVVGNVTQVPAYAPQFEGAELDLEWNFTTTPQAGLGNIPVSYYRAKALGGCSDINFMAYGRTSKGAHQLWADLVGDDSYTYDNMVKYYKKTMNFSPPNAETRLANATPMYDTVDTSTGGGIDVTFPSFAQSWSTWVSKGLAAIGLPQAHSFVDGNLLGHSWQMVGITQSTGIRSSAQAGYLRPVMSRPNLTILNGTFAERIIFNGDAASGVEVTAKGQTYTLTSKKELILSAGVFQSPQLLMVSGVGPKALLDKFNIPVVKDLPGVGQNMVDHITVPLSYQVDVVTSSTLAGSSLEEAITEWNTHGTGPLSNNGGDYIGMEKAPAEFRANFSAETVKQLSALPEDWPELQYNVLPATVSSTSIGGEGSVLGGNYGSMLASVIAPQSRGNVSIASASMSDAPLINPNIFTAQADIDLLLTAFKRVRQALQSSAMAPIMIGDEFFPGPTVQTDEQILDYLTETVRPFSHGFATCKMGKSSDPDAVIDSHGKVYGIKNLRVVDASSFPFLPPGPAPQIQVYTLAEKLADDIKQTKY.

Positions 1-24 are cleaved as a signal peptide; sequence MYMLRPSSLLLATGLLNQGSSVLA. Residue Asn32 is glycosylated (N-linked (GlcNAc...) asparagine). Residues 44-45 and 65-66 contribute to the FAD site; these read TA and EA. 2 N-linked (GlcNAc...) asparagine glycosylation sites follow: Asn76 and Asn97. Residue 126-129 participates in FAD binding; sequence NFMA. Residues Asn260, Asn265, Asn401, and Asn460 are each glycosylated (N-linked (GlcNAc...) asparagine). Catalysis depends on His538, which acts as the Proton acceptor. FAD is bound by residues Ala572 and 584–585; that span reads PQ.

The protein belongs to the GMC oxidoreductase family. In terms of assembly, homodimer. The cofactor is FAD.

Its function is as follows. Oxidoreductase; part of the gene cluster that mediates the biosynthesis of the phthalide-terpenoid hybrid 11'-O-desmethylfendlerol. MfmG seems not to be involved directly in the biosynthesis of 11'-O-desmethylfendlerol and its role has still to be determined. The biosynthesis of 11'-O-desmethylfendlerol begins with the NR-PKS mfmB that forms 3,5-dimethylorsellinic acid (DMOA), which is then transformed into the phthalide 5,7-dihydroxy-4-(hydroxymethyl)-6-methylphthalide by the cytochrome P450 monooxygenase mfmA and the hydrolase mfmC. Subsequently, the methyltransferase mfmE catalyzes 7-O-methylation to yield 5-hydroxy-4-(hydroxymethyl)-7-methoxy-6-methylphthalide, which undergoes C-3 hydroxylation by the cytochrome P450 monooxygenase mfmF. The resultant cyclopolic acid (2,5-dihydroxy-4-(hydroxymethyl)-7-methoxy-6-methylphthalide) is then farnesylated by the DMATS-type prenyltransferase mfmD to afford 5-O-farnesylcyclopolic acid. Finally, the Pyr4-family terpene cyclase mfmH cyclizes the farnesyl moiety of 5-O-farnesylcyclopolic acid into a drimane-like structure, thus completing the biosynthesis of 11'-O-desmethylfendlerol. In Annulohypoxylon moriforme (Filamentous fungus), this protein is Glucose-methanol-choline family oxidoreductase mfmG.